Consider the following 315-residue polypeptide: tRNA pseudouridine synthase B (315 aa).

The active-site Nucleophile is Asp-47.

Belongs to the pseudouridine synthase TruB family. Type 1 subfamily.

The enzyme catalyses uridine(55) in tRNA = pseudouridine(55) in tRNA. Its function is as follows. Responsible for synthesis of pseudouridine from uracil-55 in the psi GC loop of transfer RNAs. The polypeptide is tRNA pseudouridine synthase B (Shewanella pealeana (strain ATCC 700345 / ANG-SQ1)).